The chain runs to 339 residues: MSVLTVALDAMGGDFGPSETVPAAAQALSLLPKLNILLVGDQNQLVPLLQQHALSSHPRLHLVHASQSVSMAERPVIALRNKTDSSMRVMLELVSSGRAQACVSGGNTGALMVMAMRVLTMLPHLKRPALCSSLPNLHGRHTVMLDLGCNVNCTPEMLWQFACLGDLFAKHVHAVSSPKIALLNVGEEVIKGSKLVQETAKLLASDKQFNYIGFLEGDQLISGQADVIVCDGFTGNIALKTAEGIARFFYSQIKASNEADKVKNKSNTAAEIQTSLSVMHPDHYNGASLLGLNGIVIKSHGRADRRALSNAILHAVAEIEQQLPRRISERFIAEHTYER.

Belongs to the PlsX family. As to quaternary structure, homodimer. Probably interacts with PlsY.

The protein localises to the cytoplasm. The catalysed reaction is a fatty acyl-[ACP] + phosphate = an acyl phosphate + holo-[ACP]. It functions in the pathway lipid metabolism; phospholipid metabolism. Its function is as follows. Catalyzes the reversible formation of acyl-phosphate (acyl-PO(4)) from acyl-[acyl-carrier-protein] (acyl-ACP). This enzyme utilizes acyl-ACP as fatty acyl donor, but not acyl-CoA. The sequence is that of Phosphate acyltransferase from Tolumonas auensis (strain DSM 9187 / NBRC 110442 / TA 4).